We begin with the raw amino-acid sequence, 277 residues long: Bleomycin hydrolase (277 aa).

C53 is a catalytic residue.

This sequence belongs to the peptidase C1 family. In terms of assembly, homohexamer. Interacts with NUDT12 (via ANK repeats).

The protein localises to the cytoplasm. Its subcellular location is the cytoplasmic granule. The catalysed reaction is Inactivates bleomycin B2 (a cytotoxic glycometallopeptide) by hydrolysis of a carboxyamide bond of beta-aminoalanine, but also shows general aminopeptidase activity. The specificity varies somewhat with source, but amino acid arylamides of Met, Leu and Ala are preferred.. Its activity is regulated as follows. Strongly inhibited by leupeptin, puromycin, NEM, and divalent cations. Its function is as follows. The normal physiological role of BLM hydrolase is unknown, but it catalyzes the inactivation of the antitumor drug BLM (a glycopeptide) by hydrolyzing the carboxamide bond of its B-aminoalaninamide moiety thus protecting normal and malignant cells from BLM toxicity. The chain is Bleomycin hydrolase (BLMH) from Oryctolagus cuniculus (Rabbit).